We begin with the raw amino-acid sequence, 192 residues long: Spermatogenesis-associated protein 3 (192 aa).

Residues 1–15 (MKKVKKKRSEARRHR) show a composition bias toward basic residues. Disordered stretches follow at residues 1 to 65 (MKKV…TTSR) and 161 to 184 (SRKP…GSGG). Residues 19–59 (SQHASSNSTSQQPSPESTPQQPSPESTPQQPSPESTPQHSS) are compositionally biased toward low complexity.

The protein resides in the cell projection. It localises to the cilium. The protein localises to the flagellum. The protein is Spermatogenesis-associated protein 3 (SPATA3) of Homo sapiens (Human).